The following is a 181-amino-acid chain: Adenylate kinase (181 aa).

10–15 (GAGKGT) contacts ATP. Residues 30–59 (STGDLFRANISQQTPLGREAQKYMDAGDLV) are NMP. Residues T31, R36, 57–59 (DLV), 85–88 (GYPR), and Q92 contribute to the AMP site. Residues 126 to 132 (ARGRNDD) are LID. R127 contacts ATP. R129 and R140 together coordinate AMP. Residue G166 participates in ATP binding.

This sequence belongs to the adenylate kinase family. In terms of assembly, monomer.

Its subcellular location is the cytoplasm. The catalysed reaction is AMP + ATP = 2 ADP. The protein operates within purine metabolism; AMP biosynthesis via salvage pathway; AMP from ADP: step 1/1. In terms of biological role, catalyzes the reversible transfer of the terminal phosphate group between ATP and AMP. Plays an important role in cellular energy homeostasis and in adenine nucleotide metabolism. The polypeptide is Adenylate kinase (Nocardia farcinica (strain IFM 10152)).